We begin with the raw amino-acid sequence, 1172 residues long: DNA-directed RNA polymerase subunit beta (1172 aa).

Belongs to the RNA polymerase beta chain family. As to quaternary structure, the RNAP catalytic core consists of 2 alpha, 1 beta, 1 beta' and 1 omega subunit. When a sigma factor is associated with the core the holoenzyme is formed, which can initiate transcription.

It catalyses the reaction RNA(n) + a ribonucleoside 5'-triphosphate = RNA(n+1) + diphosphate. DNA-dependent RNA polymerase catalyzes the transcription of DNA into RNA using the four ribonucleoside triphosphates as substrates. The polypeptide is DNA-directed RNA polymerase subunit beta (Mycobacterium sp. (strain KMS)).